The sequence spans 400 residues: Probable RNA polymerase sigma factor RfaY (400 aa).

A Polymerase core binding motif is present at residues 62-75; sequence WQRLAQLHQPASFL. A DNA-binding region (H-T-H motif) is located at residues 165–184; the sequence is SDAAVRKRLSRARATVRNEL.

This sequence belongs to the sigma-70 factor family. ECF subfamily.

In terms of biological role, sigma factors are initiation factors that promote the attachment of RNA polymerase to specific initiation sites and are then released. This sigma factor is involved in lipopolysaccharide biosynthesis and pathogenicity. This is Probable RNA polymerase sigma factor RfaY (rfaY) from Xanthomonas campestris pv. campestris (strain ATCC 33913 / DSM 3586 / NCPPB 528 / LMG 568 / P 25).